Here is a 571-residue protein sequence, read N- to C-terminus: Proline--tRNA ligase (571 aa).

It belongs to the class-II aminoacyl-tRNA synthetase family. ProS type 1 subfamily. As to quaternary structure, homodimer.

Its subcellular location is the cytoplasm. The catalysed reaction is tRNA(Pro) + L-proline + ATP = L-prolyl-tRNA(Pro) + AMP + diphosphate. Its function is as follows. Catalyzes the attachment of proline to tRNA(Pro) in a two-step reaction: proline is first activated by ATP to form Pro-AMP and then transferred to the acceptor end of tRNA(Pro). As ProRS can inadvertently accommodate and process non-cognate amino acids such as alanine and cysteine, to avoid such errors it has two additional distinct editing activities against alanine. One activity is designated as 'pretransfer' editing and involves the tRNA(Pro)-independent hydrolysis of activated Ala-AMP. The other activity is designated 'posttransfer' editing and involves deacylation of mischarged Ala-tRNA(Pro). The misacylated Cys-tRNA(Pro) is not edited by ProRS. This Psychromonas ingrahamii (strain DSM 17664 / CCUG 51855 / 37) protein is Proline--tRNA ligase.